Reading from the N-terminus, the 387-residue chain is Cytochrome b (387 aa).

The next 4 membrane-spanning stretches (helical) occupy residues 32 to 52 (FGSL…LLAC), 76 to 98 (FLLR…LHIG), 113 to 133 (TWNI…LGYC), and 179 to 199 (FFSL…MHLI). His82 and His96 together coordinate heme b. Heme b is bound by residues His183 and His197. His202 is a binding site for a ubiquinone. The next 4 membrane-spanning stretches (helical) occupy residues 225 to 245 (FLIK…YMVF), 289 to 309 (QLGV…PLLD), 321 to 341 (MGKF…WIGG), and 348 to 368 (FITI…ILIP).

Belongs to the cytochrome b family. In terms of assembly, fungal cytochrome b-c1 complex contains 10 subunits; 3 respiratory subunits, 2 core proteins and 5 low-molecular weight proteins. Cytochrome b-c1 complex is a homodimer. It depends on heme b as a cofactor.

The protein resides in the mitochondrion inner membrane. In terms of biological role, component of the ubiquinol-cytochrome c reductase complex (complex III or cytochrome b-c1 complex) that is part of the mitochondrial respiratory chain. The b-c1 complex mediates electron transfer from ubiquinol to cytochrome c. Contributes to the generation of a proton gradient across the mitochondrial membrane that is then used for ATP synthesis. This is Cytochrome b (cob) from Schizosaccharomyces octosporus (Fission yeast).